A 302-amino-acid chain; its full sequence is GTPase Era (302 aa).

An Era-type G domain is found at 9–177 (YCGFIAIVGR…EKIVRQSLRE (169 aa)). The tract at residues 17–24 (GRPNVGKS) is G1. 17-24 (GRPNVGKS) lines the GTP pocket. The segment at 43 to 47 (QTTRH) is G2. Residues 64 to 67 (DTPG) are G3. Residues 64-68 (DTPGL) and 126-129 (NKVD) each bind GTP. A G4 region spans residues 126-129 (NKVD). A G5 region spans residues 156 to 158 (ISA). Residues 208–285 (TGEELPYSVT…HLELWVKVKS (78 aa)) form the KH type-2 domain.

This sequence belongs to the TRAFAC class TrmE-Era-EngA-EngB-Septin-like GTPase superfamily. Era GTPase family. Monomer.

Its subcellular location is the cytoplasm. It localises to the cell inner membrane. In terms of biological role, an essential GTPase that binds both GDP and GTP, with rapid nucleotide exchange. Plays a role in 16S rRNA processing and 30S ribosomal subunit biogenesis and possibly also in cell cycle regulation and energy metabolism. This chain is GTPase Era, found in Haemophilus influenzae (strain PittGG).